The chain runs to 213 residues: Cytochrome c biogenesis ATP-binding export protein CcmA (213 aa).

The ABC transporter domain maps to 7–213 (LKTKKLACQR…VRLENYKFTE (207 aa)). Residue 39–46 (GHNGIGKT) participates in ATP binding.

The protein belongs to the ABC transporter superfamily. CcmA exporter (TC 3.A.1.107) family. As to quaternary structure, the complex is composed of two ATP-binding proteins (CcmA) and two transmembrane proteins (CcmB).

It localises to the cell inner membrane. It carries out the reaction heme b(in) + ATP + H2O = heme b(out) + ADP + phosphate + H(+). Its function is as follows. Part of the ABC transporter complex CcmAB involved in the biogenesis of c-type cytochromes; once thought to export heme, this seems not to be the case, but its exact role is uncertain. Responsible for energy coupling to the transport system. This chain is Cytochrome c biogenesis ATP-binding export protein CcmA, found in Pasteurella multocida (strain Pm70).